A 264-amino-acid chain; its full sequence is Ribosomal RNA small subunit methyltransferase A (264 aa).

S-adenosyl-L-methionine-binding residues include Asn12, Leu14, Gly40, Glu61, Asp86, and Asn105.

This sequence belongs to the class I-like SAM-binding methyltransferase superfamily. rRNA adenine N(6)-methyltransferase family. RsmA subfamily.

Its subcellular location is the cytoplasm. The enzyme catalyses adenosine(1518)/adenosine(1519) in 16S rRNA + 4 S-adenosyl-L-methionine = N(6)-dimethyladenosine(1518)/N(6)-dimethyladenosine(1519) in 16S rRNA + 4 S-adenosyl-L-homocysteine + 4 H(+). Functionally, specifically dimethylates two adjacent adenosines (A1518 and A1519) in the loop of a conserved hairpin near the 3'-end of 16S rRNA in the 30S particle. May play a critical role in biogenesis of 30S subunits. In Fusobacterium nucleatum subsp. nucleatum (strain ATCC 25586 / DSM 15643 / BCRC 10681 / CIP 101130 / JCM 8532 / KCTC 2640 / LMG 13131 / VPI 4355), this protein is Ribosomal RNA small subunit methyltransferase A.